The following is a 997-amino-acid chain: Bifunctional purine synthesis protein purC/E (997 aa).

An SAICAR synthetase region spans residues 1–305; that stretch reads MTTAINNNIV…NNNNNNNNNS (305 aa). 3 stretches are compositionally biased toward low complexity: residues 294–323, 342–355, and 524–536; these read LNNN…SLPN, QQQS…NVNS, and TSTS…TTTS. 4 disordered regions span residues 294 to 355, 518 to 538, 550 to 569, and 575 to 604; these read LNNN…NVNS, IPVD…TSNA, INSN…QQQT, and PTII…SSII. The tract at residues 305 to 997 is AIR carboxylase; that stretch reads SNNNNNNTSS…GRKMGHVTQQ (693 aa). Residues 575 to 597 are compositionally biased toward low complexity; that stretch reads PTIINTPTPVRSSVSRSQSPLPS. ATP is bound by residues Arg-728, Lys-768, Gln-779, 807 to 810, and Glu-815; that span reads EQYI. Positions 732–927 constitute an ATP-grasp domain; the sequence is KTFIQSLDIP…QFEQLIRCVC (196 aa). Residues Glu-880 and Glu-898 each contribute to the Mg(2+) site. An ATP-binding site is contributed by 897–898; it reads NE.

It in the N-terminal section; belongs to the SAICAR synthetase family. This sequence in the C-terminal section; belongs to the AIR carboxylase family. Class I subfamily. Mg(2+) serves as cofactor. Requires Mn(2+) as cofactor.

It carries out the reaction 5-amino-1-(5-phospho-D-ribosyl)imidazole-4-carboxylate + L-aspartate + ATP = (2S)-2-[5-amino-1-(5-phospho-beta-D-ribosyl)imidazole-4-carboxamido]succinate + ADP + phosphate + 2 H(+). The enzyme catalyses 5-amino-1-(5-phospho-D-ribosyl)imidazole-4-carboxylate + H(+) = 5-amino-1-(5-phospho-beta-D-ribosyl)imidazole + CO2. It functions in the pathway purine metabolism; IMP biosynthesis via de novo pathway; 5-amino-1-(5-phospho-D-ribosyl)imidazole-4-carboxylate from 5-amino-1-(5-phospho-D-ribosyl)imidazole (carboxylase route): step 1/1. It participates in purine metabolism; IMP biosynthesis via de novo pathway; 5-amino-1-(5-phospho-D-ribosyl)imidazole-4-carboxamide from 5-amino-1-(5-phospho-D-ribosyl)imidazole-4-carboxylate: step 1/2. Bifunctional enzyme involved in de novo IMP synthesis, an essential step for de nove purine synthesis. This Dictyostelium discoideum (Social amoeba) protein is Bifunctional purine synthesis protein purC/E (purC/E).